The primary structure comprises 388 residues: Succinate--CoA ligase [ADP-forming] subunit beta (388 aa).

The 236-residue stretch at 9 to 244 folds into the ATP-grasp domain; it reads KQLFAQYGLP…PAQNDAREAH (236 aa). ATP-binding positions include Lys46, 53-55, Glu99, Thr102, and Glu107; that span reads GRG. Mg(2+) contacts are provided by Asn199 and Asp213. Residues Asn264 and 321–323 contribute to the substrate site; that span reads GIV.

It belongs to the succinate/malate CoA ligase beta subunit family. Heterotetramer of two alpha and two beta subunits. Mg(2+) is required as a cofactor.

It carries out the reaction succinate + ATP + CoA = succinyl-CoA + ADP + phosphate. The catalysed reaction is GTP + succinate + CoA = succinyl-CoA + GDP + phosphate. It participates in carbohydrate metabolism; tricarboxylic acid cycle; succinate from succinyl-CoA (ligase route): step 1/1. In terms of biological role, succinyl-CoA synthetase functions in the citric acid cycle (TCA), coupling the hydrolysis of succinyl-CoA to the synthesis of either ATP or GTP and thus represents the only step of substrate-level phosphorylation in the TCA. The beta subunit provides nucleotide specificity of the enzyme and binds the substrate succinate, while the binding sites for coenzyme A and phosphate are found in the alpha subunit. The chain is Succinate--CoA ligase [ADP-forming] subunit beta from Edwardsiella ictaluri (strain 93-146).